A 635-amino-acid polypeptide reads, in one-letter code: ATP-dependent zinc metalloprotease FtsH (635 aa).

The Cytoplasmic segment spans residues 1–6 (MNNQGR). A helical membrane pass occupies residues 7 to 27 (SILTWAALFVFVILLFNVFQS). The Periplasmic portion of the chain corresponds to 28 to 103 (DGLLGGRNNI…VVPLETRMNT (76 aa)). A helical transmembrane segment spans residues 104-124 (FLGFLISWFPMLLLIGVWVFF). Over 125–635 (MRQMHGGGKA…KKAKKESTNI (511 aa)) the chain is Cytoplasmic. 195-202 (GPPGTGKT) is a binding site for ATP. His-417 contacts Zn(2+). Glu-418 is an active-site residue. Positions 421 and 495 each coordinate Zn(2+). Positions 600–635 (SEEENKFPFNDSPTIKIDKEKSPEKAKKAKKESTNI) are disordered. Basic and acidic residues predominate over residues 615–635 (KIDKEKSPEKAKKAKKESTNI).

In the central section; belongs to the AAA ATPase family. The protein in the C-terminal section; belongs to the peptidase M41 family. As to quaternary structure, homohexamer. The cofactor is Zn(2+).

The protein resides in the cell inner membrane. Functionally, acts as a processive, ATP-dependent zinc metallopeptidase for both cytoplasmic and membrane proteins. Plays a role in the quality control of integral membrane proteins. The chain is ATP-dependent zinc metalloprotease FtsH from Rickettsia felis (strain ATCC VR-1525 / URRWXCal2) (Rickettsia azadi).